Here is a 222-residue protein sequence, read N- to C-terminus: Probable nicotinate-nucleotide adenylyltransferase (222 aa).

The protein belongs to the NadD family.

It carries out the reaction nicotinate beta-D-ribonucleotide + ATP + H(+) = deamido-NAD(+) + diphosphate. The protein operates within cofactor biosynthesis; NAD(+) biosynthesis; deamido-NAD(+) from nicotinate D-ribonucleotide: step 1/1. Catalyzes the reversible adenylation of nicotinate mononucleotide (NaMN) to nicotinic acid adenine dinucleotide (NaAD). This Xylella fastidiosa (strain M12) protein is Probable nicotinate-nucleotide adenylyltransferase.